The primary structure comprises 197 residues: GTP cyclohydrolase-2 (197 aa).

50–54 (RIHSE) is a GTP binding site. Residues Cys-55, Cys-66, and Cys-68 each coordinate Zn(2+). Residues Gln-71, 93-95 (EGR), and Thr-115 contribute to the GTP site. Asp-127 (proton acceptor) is an active-site residue. Arg-129 acts as the Nucleophile in catalysis. GTP contacts are provided by Thr-150 and Lys-155.

Belongs to the GTP cyclohydrolase II family. Requires Zn(2+) as cofactor.

It carries out the reaction GTP + 4 H2O = 2,5-diamino-6-hydroxy-4-(5-phosphoribosylamino)-pyrimidine + formate + 2 phosphate + 3 H(+). The protein operates within cofactor biosynthesis; riboflavin biosynthesis; 5-amino-6-(D-ribitylamino)uracil from GTP: step 1/4. Its function is as follows. Catalyzes the conversion of GTP to 2,5-diamino-6-ribosylamino-4(3H)-pyrimidinone 5'-phosphate (DARP), formate and pyrophosphate. This Neisseria gonorrhoeae (strain ATCC 700825 / FA 1090) protein is GTP cyclohydrolase-2.